The sequence spans 648 residues: Copper methylamine oxidase (648 aa).

The propeptide occupies 1–9 (MTLNAESEA). 299–310 (AFDSGEYNIGNM) serves as a coordination point for substrate. Asp301 functions as the Proton acceptor in the catalytic mechanism. A disulfide bond links Cys320 and Cys346. A substrate-binding site is contributed by 382-387 (VANYEY). Tyr385 functions as the Schiff-base intermediate with substrate; via topaquinone in the catalytic mechanism. Tyr385 is modified (2',4',5'-topaquinone). Cu cation contacts are provided by His436 and His438. The Mn(2+) site is built by Asp445, Phe446, and Asp584. His595 serves as a coordination point for Cu cation. Residues 629-648 (PTSTSTTQTGEADTCCHTDK) are disordered.

Belongs to the copper/topaquinone oxidase family. In terms of assembly, homodimer. Cu cation serves as cofactor. It depends on Zn(2+) as a cofactor. Requires L-topaquinone as cofactor. Mn(2+) is required as a cofactor. In terms of processing, topaquinone (TPQ) is generated by copper-dependent autoxidation of a specific tyrosyl residue.

The catalysed reaction is a primary methyl amine + O2 + H2O = an aldehyde + H2O2 + NH4(+). This chain is Copper methylamine oxidase (maoII), found in Arthrobacter sp. (strain P1).